The sequence spans 220 residues: Iron-sulfur cluster repair protein YtfE (220 aa).

This sequence belongs to the RIC family. YtfE subfamily. Homodimer.

Its subcellular location is the cytoplasm. In terms of biological role, di-iron-containing protein involved in the repair of iron-sulfur clusters damaged by oxidative and nitrosative stress conditions. The sequence is that of Iron-sulfur cluster repair protein YtfE from Escherichia coli O157:H7.